A 61-amino-acid polypeptide reads, in one-letter code: Small ribosomal subunit protein uS14B (61 aa).

Positions 24, 27, 40, and 43 each coordinate Zn(2+).

Belongs to the universal ribosomal protein uS14 family. Zinc-binding uS14 subfamily. As to quaternary structure, part of the 30S ribosomal subunit. Contacts proteins S3 and S10. Requires Zn(2+) as cofactor.

Functionally, binds 16S rRNA, required for the assembly of 30S particles and may also be responsible for determining the conformation of the 16S rRNA at the A site. The sequence is that of Small ribosomal subunit protein uS14B from Shouchella clausii (strain KSM-K16) (Alkalihalobacillus clausii).